The sequence spans 149 residues: Transcription antitermination protein NusB (149 aa).

It belongs to the NusB family.

Involved in transcription antitermination. Required for transcription of ribosomal RNA (rRNA) genes. Binds specifically to the boxA antiterminator sequence of the ribosomal RNA (rrn) operons. The sequence is that of Transcription antitermination protein NusB from Acinetobacter baumannii (strain AB307-0294).